Consider the following 448-residue polypeptide: Exodeoxyribonuclease 7 large subunit (448 aa).

Belongs to the XseA family. In terms of assembly, heterooligomer composed of large and small subunits.

It localises to the cytoplasm. It carries out the reaction Exonucleolytic cleavage in either 5'- to 3'- or 3'- to 5'-direction to yield nucleoside 5'-phosphates.. In terms of biological role, bidirectionally degrades single-stranded DNA into large acid-insoluble oligonucleotides, which are then degraded further into small acid-soluble oligonucleotides. In Shewanella baltica (strain OS223), this protein is Exodeoxyribonuclease 7 large subunit.